Here is an 86-residue protein sequence, read N- to C-terminus: Diphthamide biosynthesis protein 3 (86 aa).

The 57-residue stretch at 4–60 (YHDEVEIEDFEYDEEEEMYYYPCPCGDRFQISKEELIEGEEVATCPSCSLVIKVIYD) folds into the DPH-type MB domain. Fe cation-binding residues include C26, C28, C48, and C51.

The protein belongs to the DPH3 family. As to quaternary structure, component of the 2-(3-amino-3-carboxypropyl)histidine synthase complex composed of Dph1, Dph2, Dph3 and a NADH-dependent reductase. It depends on Fe(2+) as a cofactor.

The catalysed reaction is [3Fe-4S](1+)-[protein] + Fe(2+)-[Dph3] = [3Fe-4S](0)-[protein] + Fe(3+)-[Dph3]. The enzyme catalyses 2 [3Fe-4S](0)-[protein] + 2 Fe(2+)-[Dph3] + NADH = 2 [4Fe-4S](1+)-[protein] + 2 [Dph3] + NAD(+) + H(+). Its pathway is protein modification; peptidyl-diphthamide biosynthesis. Its function is as follows. Required for the first step of diphthamide biosynthesis, a post-translational modification of histidine which occurs in elongation factor 2. Dph1 and Dph2 transfer a 3-amino-3-carboxypropyl (ACP) group from S-adenosyl-L-methionine (SAM) to a histidine residue, the reaction is assisted by a reduction system comprising Dph3 and a NADH-dependent reductase. Acts as an electron donor to reduce the Fe-S cluster in Dph1-Dph2 keeping the [4Fe-4S] clusters in the active and reduced state. Restores iron to Dph1-Dph2 iron-sulfur clusters which have degraded from [4Fe-4S] to [3Fe-4S] by donating an iron atom to reform [4Fe-4S] clusters, in a manner dependent on the presence of elongation factor 2 and SAM. Associates with the elongator complex and is required for tRNA Wobble base modifications mediated by the elongator complex. The elongator complex is required for multiple tRNA modifications, including mcm5U (5-methoxycarbonylmethyl uridine), mcm5s 2U (5-methoxycarbonylmethyl-2-thiouridine), and ncm5U (5-carbamoylmethyl uridine). The chain is Diphthamide biosynthesis protein 3 from Drosophila melanogaster (Fruit fly).